The sequence spans 90 residues: MTICVRVRVSGRVQGVGYRYYTTTHAKALGVKGWIRNLPGGGVEAVLEGERKSVGELLGLMKSGPSGAMVSGMEIAEVECKGHDDFKIIY.

One can recognise an Acylphosphatase-like domain in the interval 4-90; the sequence is CVRVRVSGRV…KGHDDFKIIY (87 aa). Active-site residues include arginine 19 and asparagine 37.

The protein belongs to the acylphosphatase family.

It catalyses the reaction an acyl phosphate + H2O = a carboxylate + phosphate + H(+). This chain is Acylphosphatase (acyP), found in Methanothrix thermoacetophila (strain DSM 6194 / JCM 14653 / NBRC 101360 / PT) (Methanosaeta thermophila).